Reading from the N-terminus, the 288-residue chain is Executioner caspase (288 aa).

Residue Cys131 is part of the active site.

Belongs to the peptidase C14A family.

Its function is as follows. May induce host cell apoptosis and contribute of the establishment of a special cell cleavage process in which apoppotic bodies are rescued by the virus and differentiate to form large vesicles in which virion assembles. This chain is Executioner caspase, found in Spodoptera frugiperda ascovirus 1a (SfAV-1a).